The following is a 213-amino-acid chain: Glycerol-3-phosphate acyltransferase (213 aa).

6 helical membrane-spanning segments follow: residues 4-24 (IILL…LWIG), 48-68 (ILGV…GTLA), 71-91 (LPLF…LAVI), 113-133 (VILG…IIVL), 144-164 (VIGA…GFIL), and 165-185 (TSYD…IILR).

It belongs to the PlsY family. In terms of assembly, probably interacts with PlsX.

Its subcellular location is the cell membrane. It carries out the reaction an acyl phosphate + sn-glycerol 3-phosphate = a 1-acyl-sn-glycero-3-phosphate + phosphate. The protein operates within lipid metabolism; phospholipid metabolism. Catalyzes the transfer of an acyl group from acyl-phosphate (acyl-PO(4)) to glycerol-3-phosphate (G3P) to form lysophosphatidic acid (LPA). This enzyme utilizes acyl-phosphate as fatty acyl donor, but not acyl-CoA or acyl-ACP. In Lactococcus lactis subsp. lactis (strain IL1403) (Streptococcus lactis), this protein is Glycerol-3-phosphate acyltransferase.